The primary structure comprises 264 residues: Undecaprenyl-diphosphatase (264 aa).

7 helical membrane-spanning segments follow: residues 38–58 (RSDF…VLVF), 75–95 (REYV…GLVV), 106–126 (VSPV…VEAY), 136–156 (VTWT…VFPG), 181–201 (FVFL…FLEM), 217–237 (VAFL…MGYI), and 242–262 (FTAF…WLPS).

This sequence belongs to the UppP family.

Its subcellular location is the cell inner membrane. The enzyme catalyses di-trans,octa-cis-undecaprenyl diphosphate + H2O = di-trans,octa-cis-undecaprenyl phosphate + phosphate + H(+). Functionally, catalyzes the dephosphorylation of undecaprenyl diphosphate (UPP). Confers resistance to bacitracin. The sequence is that of Undecaprenyl-diphosphatase from Stenotrophomonas maltophilia (strain R551-3).